The primary structure comprises 254 residues: Adenosylcobinamide-GDP ribazoletransferase (254 aa).

7 helical membrane-spanning segments follow: residues 27 to 47 (SSLYWFPVVGLVIGGIVVLFA), 50 to 70 (GMGAGWPELAAVLALLGGFIL), 104 to 124 (VGSFGSLALIGVMLFKWICLL), 131 to 151 (AYGMIAAGVVLSRTAQVLLAA), 170 to 190 (AGWPHLLVASVSGVVLLFVLL), 194 to 214 (VVPSSILLFGSVVALFFVGWL), and 233 to 253 (LVEIAVWFVAALWLKGLFSAI).

This sequence belongs to the CobS family. Mg(2+) is required as a cofactor.

It localises to the cell inner membrane. The enzyme catalyses alpha-ribazole + adenosylcob(III)inamide-GDP = adenosylcob(III)alamin + GMP + H(+). It carries out the reaction alpha-ribazole 5'-phosphate + adenosylcob(III)inamide-GDP = adenosylcob(III)alamin 5'-phosphate + GMP + H(+). Its pathway is cofactor biosynthesis; adenosylcobalamin biosynthesis; adenosylcobalamin from cob(II)yrinate a,c-diamide: step 7/7. Joins adenosylcobinamide-GDP and alpha-ribazole to generate adenosylcobalamin (Ado-cobalamin). Also synthesizes adenosylcobalamin 5'-phosphate from adenosylcobinamide-GDP and alpha-ribazole 5'-phosphate. In Chlorobaculum parvum (strain DSM 263 / NCIMB 8327) (Chlorobium vibrioforme subsp. thiosulfatophilum), this protein is Adenosylcobinamide-GDP ribazoletransferase.